A 327-amino-acid polypeptide reads, in one-letter code: MSEIKTDDPKRGIKLRGADKTARIPIKVVPLQEKLKKPEWIRAKLPSRKFFEIKDILREQKMHTVCEEASCPNIGECFSKGTATFMIMGDICTRRCPFCDVGHGRPNMLDPDEPRNLAESVKAMNLRYVVITSVDRDDLRDGGAQHFADCIKAIRETSPNTKIEILVPDFRGRLDIALKILAETPPDVMNHNLETHPSLYRKARPGANYQHSLDLLKRYKEMMPHIPTKSGIMVGLGETDEDVREIMRDMRAHNIEMITIGQYLQPSDGHLPVLRYVTPEQFKIFEKEAYELGFSNAAIGAMVRSSYHADEQAAEALRESHGGCGHH.

[4Fe-4S] cluster contacts are provided by C66, C71, C77, C92, C96, C99, and S306. A Radical SAM core domain is found at 78–295; it reads FSKGTATFMI…EKEAYELGFS (218 aa).

This sequence belongs to the radical SAM superfamily. Lipoyl synthase family. It depends on [4Fe-4S] cluster as a cofactor.

The protein resides in the cytoplasm. It catalyses the reaction [[Fe-S] cluster scaffold protein carrying a second [4Fe-4S](2+) cluster] + N(6)-octanoyl-L-lysyl-[protein] + 2 oxidized [2Fe-2S]-[ferredoxin] + 2 S-adenosyl-L-methionine + 4 H(+) = [[Fe-S] cluster scaffold protein] + N(6)-[(R)-dihydrolipoyl]-L-lysyl-[protein] + 4 Fe(3+) + 2 hydrogen sulfide + 2 5'-deoxyadenosine + 2 L-methionine + 2 reduced [2Fe-2S]-[ferredoxin]. It participates in protein modification; protein lipoylation via endogenous pathway; protein N(6)-(lipoyl)lysine from octanoyl-[acyl-carrier-protein]: step 2/2. Functionally, catalyzes the radical-mediated insertion of two sulfur atoms into the C-6 and C-8 positions of the octanoyl moiety bound to the lipoyl domains of lipoate-dependent enzymes, thereby converting the octanoylated domains into lipoylated derivatives. The chain is Lipoyl synthase from Neisseria meningitidis serogroup B (strain ATCC BAA-335 / MC58).